The sequence spans 100 residues: Aspartyl/glutamyl-tRNA(Asn/Gln) amidotransferase subunit C (100 aa).

Belongs to the GatC family. Heterotrimer of A, B and C subunits.

The catalysed reaction is L-glutamyl-tRNA(Gln) + L-glutamine + ATP + H2O = L-glutaminyl-tRNA(Gln) + L-glutamate + ADP + phosphate + H(+). The enzyme catalyses L-aspartyl-tRNA(Asn) + L-glutamine + ATP + H2O = L-asparaginyl-tRNA(Asn) + L-glutamate + ADP + phosphate + 2 H(+). Its function is as follows. Allows the formation of correctly charged Asn-tRNA(Asn) or Gln-tRNA(Gln) through the transamidation of misacylated Asp-tRNA(Asn) or Glu-tRNA(Gln) in organisms which lack either or both of asparaginyl-tRNA or glutaminyl-tRNA synthetases. The reaction takes place in the presence of glutamine and ATP through an activated phospho-Asp-tRNA(Asn) or phospho-Glu-tRNA(Gln). The chain is Aspartyl/glutamyl-tRNA(Asn/Gln) amidotransferase subunit C from Erythrobacter litoralis (strain HTCC2594).